The chain runs to 643 residues: MPIITLPDGSQRQFDNPVSVMEVAQSIGAGLAKATIAGRVNGERRDASDIISEDATLEIITAKDEDGLEIIRHSTAHLLGHAIKQLFPNVKMAIGPTIDNGFYYDIDLDRSLTQEDLDALEARMLELAKTNYDVVKKRVSWQEARDTFESRGESYKMAILDENISKDDRPALYHHEEYIDMCRGPHVPNMRFCHHFKLQKVAGAYWRGDSKNKMLQRIYGTAWADKKQLADYLHRLEEAAKRDHRKIGKALDLYHMQEEAPGMVFWHNDGWTIFRELETFVRTKLKQYDYQEVKGPFMMDRVLWEKTGHWQNYGDLMFTTQSENREYAIKPMNCPGHIQIFNQGLKSYRDLPLRMAEFGSCHRNEPSGSLHGLMRVRGFTQDDAHIFCMPEQVESEVTSCIKMVYDIYSTFGFENIQVKLSTRPANSIGTDEMWNKAEADLAAALTANGLAFEIQEGEGAFYGPKIEFALRDCLDREWQCGTIQLDFFLPERLSASYVAEDNDRKTPVMIHRAILGSIERFIGIITEEYAGFFPAWLAPVQAVVMNITDSQAEYVQQVVKQLSDAGLRVKADLRNEKVGFKVREHTLRRVPYMLVCGDKEIAEGKVSVRTRKGADLGTYKVEEFVEMLKKQVRGRELKLLGEE.

The TGS domain maps to 1–61 (MPIITLPDGS…SEDATLEIIT (61 aa)). Residues 243–534 (DHRKIGKALD…ITEEYAGFFP (292 aa)) are catalytic. Residues C334, H385, and H511 each contribute to the Zn(2+) site.

This sequence belongs to the class-II aminoacyl-tRNA synthetase family. In terms of assembly, homodimer. The cofactor is Zn(2+).

It localises to the cytoplasm. The enzyme catalyses tRNA(Thr) + L-threonine + ATP = L-threonyl-tRNA(Thr) + AMP + diphosphate + H(+). Catalyzes the attachment of threonine to tRNA(Thr) in a two-step reaction: L-threonine is first activated by ATP to form Thr-AMP and then transferred to the acceptor end of tRNA(Thr). Also edits incorrectly charged L-seryl-tRNA(Thr). In Glaesserella parasuis serovar 5 (strain SH0165) (Haemophilus parasuis), this protein is Threonine--tRNA ligase.